The following is a 534-amino-acid chain: Probable alpha-galactosidase A (534 aa).

The N-terminal stretch at 1 to 25 is a signal peptide; the sequence is MRLITRWIPLANALASTMPVQVVAS. Cys47 and Cys79 form a disulfide bridge. N-linked (GlcNAc...) asparagine glycosylation is found at Asn50, Asn88, Asn94, and Asn124. An intrachain disulfide couples Cys127 to Cys157. The active-site Nucleophile is Asp155. The N-linked (GlcNAc...) asparagine glycan is linked to Asn204. Asp213 acts as the Proton donor in catalysis. One can recognise a Ricin B-type lectin domain in the interval 413–534; it reads CSQVIPTGLI…GLPAGVHVAL (122 aa). Cysteines 430 and 443 form a disulfide. Asn444 is a glycosylation site (N-linked (GlcNAc...) asparagine). Cys468 and Cys481 are oxidised to a cystine.

This sequence belongs to the glycosyl hydrolase 27 family.

It localises to the secreted. The catalysed reaction is Hydrolysis of terminal, non-reducing alpha-D-galactose residues in alpha-D-galactosides, including galactose oligosaccharides, galactomannans and galactolipids.. In terms of biological role, hydrolyzes a variety of simple alpha-D-galactoside as well as more complex molecules such as oligosaccharides and polysaccharides. In Aspergillus flavus (strain ATCC 200026 / FGSC A1120 / IAM 13836 / NRRL 3357 / JCM 12722 / SRRC 167), this protein is Probable alpha-galactosidase A (aglA).